A 310-amino-acid chain; its full sequence is MKKIASVLALFVALLFGLLACSKGTSSKSSSDKLKVVTTNSILADITKNIAGDKIELHSIVPVGQDPHEYEPLPEDVKKTSQADLIFYNGINLETGGNAWFTKLVKNANKVENKDYFAASDGVEVIYLEGQNQAGKEDPHAWLNLENGIIYAKNIAKQLIAKDPKNKDFYEKNLAAYTEKLSKLDQEAKQAFNNIPAEKKMIVTSEGCFKYFSKAYGVPSAYIWEINTEVEGTPEQIKTLLEKLRQTKVPSLFVESSVDERPMKTVSKDSNIPIFAKIFTDSIAKEGEEGDSYYSMMKWNLEKIAEGLNK.

Positions Met1–Ala20 are cleaved as a signal peptide. Residue Cys21 is the site of N-palmitoyl cysteine attachment. Cys21 carries S-diacylglycerol cysteine lipidation. Mn(2+) contacts are provided by His68, His140, Glu206, and Asp281.

This sequence belongs to the bacterial solute-binding protein 9 family. Lipoprotein receptor antigen (Lrai) subfamily.

The protein localises to the cell membrane. Functionally, part of the ATP-binding cassette (ABC) transport system PsaABC involved in manganese import. Binds manganese with high affinity and specificity and delivers it to the membrane permease for translocation into the cytoplasm. Also acts as an adhesin which is involved on adherence to extracellular matrix. This chain is Manganese ABC transporter substrate-binding lipoprotein PsaA, found in Streptococcus pneumoniae.